The following is a 155-amino-acid chain: Large ribosomal subunit protein eL19 (155 aa).

The span at 66–84 shows a compositional bias: basic residues; sequence VRHLQRRKGRRRGMGRRKG. The interval 66 to 85 is disordered; it reads VRHLQRRKGRRRGMGRRKGV.

It belongs to the eukaryotic ribosomal protein eL19 family. In terms of assembly, part of the 50S ribosomal subunit.

Its function is as follows. Binds to the 23S rRNA. The protein is Large ribosomal subunit protein eL19 of Aeropyrum pernix (strain ATCC 700893 / DSM 11879 / JCM 9820 / NBRC 100138 / K1).